We begin with the raw amino-acid sequence, 678 residues long: DNA ligase (678 aa).

NAD(+)-binding positions include 35–39, 84–85, and E115; these read DEEYD and SL. The active-site N6-AMP-lysine intermediate is the K117. NAD(+) contacts are provided by R138, E172, K288, and K312. Residues C406, C409, C425, and C430 each contribute to the Zn(2+) site. Residues 589–678 enclose the BRCT domain; it reads VQSKILSNLT…IKNLRQQKLF (90 aa).

The protein belongs to the NAD-dependent DNA ligase family. LigA subfamily. The cofactor is Mg(2+). Mn(2+) is required as a cofactor.

The catalysed reaction is NAD(+) + (deoxyribonucleotide)n-3'-hydroxyl + 5'-phospho-(deoxyribonucleotide)m = (deoxyribonucleotide)n+m + AMP + beta-nicotinamide D-nucleotide.. Its function is as follows. DNA ligase that catalyzes the formation of phosphodiester linkages between 5'-phosphoryl and 3'-hydroxyl groups in double-stranded DNA using NAD as a coenzyme and as the energy source for the reaction. It is essential for DNA replication and repair of damaged DNA. The polypeptide is DNA ligase (Pseudothermotoga lettingae (strain ATCC BAA-301 / DSM 14385 / NBRC 107922 / TMO) (Thermotoga lettingae)).